A 389-amino-acid polypeptide reads, in one-letter code: Succinate--CoA ligase [ADP-forming] subunit beta (389 aa).

One can recognise an ATP-grasp domain in the interval 9–236 (KELFAKHGVP…RDATDPLELK (228 aa)). Residues Lys45, 52-54 (GRG), Ser94, and Glu99 contribute to the ATP site. 2 residues coordinate Mg(2+): Asn191 and Asp205. Substrate is bound by residues Asn256 and 318 to 320 (GIT).

The protein belongs to the succinate/malate CoA ligase beta subunit family. As to quaternary structure, heterotetramer of two alpha and two beta subunits. Requires Mg(2+) as cofactor.

It catalyses the reaction succinate + ATP + CoA = succinyl-CoA + ADP + phosphate. The catalysed reaction is GTP + succinate + CoA = succinyl-CoA + GDP + phosphate. Its pathway is carbohydrate metabolism; tricarboxylic acid cycle; succinate from succinyl-CoA (ligase route): step 1/1. In terms of biological role, succinyl-CoA synthetase functions in the citric acid cycle (TCA), coupling the hydrolysis of succinyl-CoA to the synthesis of either ATP or GTP and thus represents the only step of substrate-level phosphorylation in the TCA. The beta subunit provides nucleotide specificity of the enzyme and binds the substrate succinate, while the binding sites for coenzyme A and phosphate are found in the alpha subunit. The chain is Succinate--CoA ligase [ADP-forming] subunit beta from Rhodococcus erythropolis (strain PR4 / NBRC 100887).